We begin with the raw amino-acid sequence, 93 residues long: Protein FMP16, mitochondrial (93 aa).

A mitochondrion-targeting transit peptide spans 1–25 (MLRTTFLRTPRQLMRKSPRASFSIV). Residues 30-93 (FPHLKNNQDE…EQNRPDDGVY (64 aa)) form a disordered region. Positions 35-93 (NNQDEAEKKEQGLFDSNKKRLDTLEHGKNPDYKQPGMEDLKKKGDDARIEQNRPDDGVY) are enriched in basic and acidic residues.

The protein resides in the mitochondrion. The protein is Protein FMP16, mitochondrial (FMP16) of Saccharomyces cerevisiae (strain ATCC 204508 / S288c) (Baker's yeast).